The sequence spans 425 residues: Glutamate-1-semialdehyde 2,1-aminomutase (425 aa).

Residue Lys-264 is modified to N6-(pyridoxal phosphate)lysine.

This sequence belongs to the class-III pyridoxal-phosphate-dependent aminotransferase family. HemL subfamily. In terms of assembly, homodimer. Pyridoxal 5'-phosphate is required as a cofactor.

The protein localises to the cytoplasm. It carries out the reaction (S)-4-amino-5-oxopentanoate = 5-aminolevulinate. It participates in porphyrin-containing compound metabolism; protoporphyrin-IX biosynthesis; 5-aminolevulinate from L-glutamyl-tRNA(Glu): step 2/2. The polypeptide is Glutamate-1-semialdehyde 2,1-aminomutase (Campylobacter lari (strain RM2100 / D67 / ATCC BAA-1060)).